Here is a 329-residue protein sequence, read N- to C-terminus: DNA-directed RNA polymerase subunit alpha (329 aa).

An alpha N-terminal domain (alpha-NTD) region spans residues 1–234; it reads MQGSVTEFLK…EQLDAFVELR (234 aa). The segment at 248 to 329 is alpha C-terminal domain (alpha-CTD); that stretch reads FDPILLRPVD…WPPASLVDDL (82 aa).

Belongs to the RNA polymerase alpha chain family. In terms of assembly, homodimer. The RNAP catalytic core consists of 2 alpha, 1 beta, 1 beta' and 1 omega subunit. When a sigma factor is associated with the core the holoenzyme is formed, which can initiate transcription.

It carries out the reaction RNA(n) + a ribonucleoside 5'-triphosphate = RNA(n+1) + diphosphate. In terms of biological role, DNA-dependent RNA polymerase catalyzes the transcription of DNA into RNA using the four ribonucleoside triphosphates as substrates. The polypeptide is DNA-directed RNA polymerase subunit alpha (Shewanella denitrificans (strain OS217 / ATCC BAA-1090 / DSM 15013)).